The sequence spans 242 residues: Biosynthetic peptidoglycan transglycosylase (242 aa).

Residues 19–39 (LMVVLAIFWGGGIALFSVAPV) form a helical membrane-spanning segment.

It belongs to the glycosyltransferase 51 family.

It localises to the cell inner membrane. It catalyses the reaction [GlcNAc-(1-&gt;4)-Mur2Ac(oyl-L-Ala-gamma-D-Glu-L-Lys-D-Ala-D-Ala)](n)-di-trans,octa-cis-undecaprenyl diphosphate + beta-D-GlcNAc-(1-&gt;4)-Mur2Ac(oyl-L-Ala-gamma-D-Glu-L-Lys-D-Ala-D-Ala)-di-trans,octa-cis-undecaprenyl diphosphate = [GlcNAc-(1-&gt;4)-Mur2Ac(oyl-L-Ala-gamma-D-Glu-L-Lys-D-Ala-D-Ala)](n+1)-di-trans,octa-cis-undecaprenyl diphosphate + di-trans,octa-cis-undecaprenyl diphosphate + H(+). The protein operates within cell wall biogenesis; peptidoglycan biosynthesis. Its function is as follows. Peptidoglycan polymerase that catalyzes glycan chain elongation from lipid-linked precursors. In Escherichia coli O81 (strain ED1a), this protein is Biosynthetic peptidoglycan transglycosylase.